Here is a 232-residue protein sequence, read N- to C-terminus: Octanoyltransferase (232 aa).

The 176-residue stretch at 44–219 folds into the BPL/LPL catalytic domain; sequence EYTADEIWVV…QLARQFGLVL (176 aa). Residues 83-90, 150-152, and 163-165 contribute to the substrate site; these read RGGQVTYH, ALG, and GLS. Catalysis depends on C181, which acts as the Acyl-thioester intermediate.

It belongs to the LipB family.

It localises to the cytoplasm. The catalysed reaction is octanoyl-[ACP] + L-lysyl-[protein] = N(6)-octanoyl-L-lysyl-[protein] + holo-[ACP] + H(+). It participates in protein modification; protein lipoylation via endogenous pathway; protein N(6)-(lipoyl)lysine from octanoyl-[acyl-carrier-protein]: step 1/2. Functionally, catalyzes the transfer of endogenously produced octanoic acid from octanoyl-acyl-carrier-protein onto the lipoyl domains of lipoate-dependent enzymes. Lipoyl-ACP can also act as a substrate although octanoyl-ACP is likely to be the physiological substrate. The sequence is that of Octanoyltransferase from Xanthomonas axonopodis pv. citri (strain 306).